Here is a 280-residue protein sequence, read N- to C-terminus: Pantothenate synthetase (280 aa).

26–33 (MGNLHEGH) serves as a coordination point for ATP. Catalysis depends on His-33, which acts as the Proton donor. Gln-57 provides a ligand contact to (R)-pantoate. Position 57 (Gln-57) interacts with beta-alanine. ATP is bound at residue 145-148 (GKKD). Gln-151 contacts (R)-pantoate. ATP is bound by residues Val-174 and 182 to 185 (LSSR).

This sequence belongs to the pantothenate synthetase family. Homodimer.

The protein resides in the cytoplasm. It carries out the reaction (R)-pantoate + beta-alanine + ATP = (R)-pantothenate + AMP + diphosphate + H(+). The protein operates within cofactor biosynthesis; (R)-pantothenate biosynthesis; (R)-pantothenate from (R)-pantoate and beta-alanine: step 1/1. Catalyzes the condensation of pantoate with beta-alanine in an ATP-dependent reaction via a pantoyl-adenylate intermediate. This is Pantothenate synthetase from Bordetella avium (strain 197N).